The sequence spans 82 residues: RNA-binding protein Hfq (82 aa).

A Sm domain is found at Asp11–Ile71.

It belongs to the Hfq family. As to quaternary structure, homohexamer.

Functionally, RNA chaperone that binds small regulatory RNA (sRNAs) and mRNAs to facilitate mRNA translational regulation in response to envelope stress, environmental stress and changes in metabolite concentrations. Also binds with high specificity to tRNAs. The sequence is that of RNA-binding protein Hfq from Rhodopseudomonas palustris (strain BisA53).